The chain runs to 153 residues: Calmodulin-like protein 4 (153 aa).

4 consecutive EF-hand domains span residues 8 to 43 (DQIN…LGAS), 44 to 79 (PTPG…QIKQ), 81 to 116 (DPKK…LGEK), and 117 to 152 (LTHK…PVRD).

It belongs to the calmodulin family. In terms of assembly, interacts with MYO7B; the interaction mediates the association of CALML4 with the IMAC/intermicrovillar adhesion complex. Interacts with MYO7A. As to expression, expressed in the small intestine, in both mature enterocytes on the villus surface and immature cells that reside in the crypt stem-cell niche.

The protein resides in the cell projection. Its subcellular location is the microvillus. Its function is as follows. As part of the intermicrovillar adhesion complex/IMAC plays a role in epithelial brush border differentiation, controlling microvilli organization and length. Acts as a light chain for MYO7B and is required for efficient targeting of the IMAC to the tips of border brush microvilli. The chain is Calmodulin-like protein 4 (Calml4) from Mus musculus (Mouse).